Consider the following 507-residue polypeptide: Serine/threonine-protein kinase BSK11 (507 aa).

The N-myristoyl glycine moiety is linked to residue glycine 2. The span at 16 to 26 (DKKITSDDLSG) shows a compositional bias: basic and acidic residues. The interval 16–44 (DKKITSDDLSGRRGKGAKRGNRHRHANIN) is disordered. The span at 27 to 41 (RRGKGAKRGNRHRHA) shows a compositional bias: basic residues. The Protein kinase domain maps to 75-332 (NAVVSVCSDQ…GDIISVITTL (258 aa)). Residues 81-89 (CSDQEPNLV) and lysine 106 each bind ATP. Aspartate 200 serves as the catalytic Proton acceptor.

Belongs to the protein kinase superfamily. Ser/Thr protein kinase family. As to quaternary structure, interacts with BRI1, ASK7/BIN2, BSK1, BSK6 and BSK8. Post-translationally, phosphorylated by BRI1, ASK7/BIN2 and ASK9/BIL2.

It localises to the cell membrane. It catalyses the reaction L-seryl-[protein] + ATP = O-phospho-L-seryl-[protein] + ADP + H(+). The enzyme catalyses L-threonyl-[protein] + ATP = O-phospho-L-threonyl-[protein] + ADP + H(+). Its function is as follows. Probable serine/threonine kinase that acts as a positive regulator of brassinosteroid (BR) signaling downstream of the receptor kinase BRI1. This Arabidopsis thaliana (Mouse-ear cress) protein is Serine/threonine-protein kinase BSK11.